The sequence spans 388 residues: Glutamine transporter 2 (388 aa).

11 helical membrane-spanning segments follow: residues 5-27 (LFGS…IPMV), 31-53 (FGLF…AALL), 86-106 (LFYL…ADLI), 121-141 (FAQV…TQII), 147-167 (LLFF…IPGM), 186-206 (TSTI…LVAY), 218-238 (MVIL…YAVV), 268-288 (IILS…VAMA), 302-322 (IVTY…AADQ), 326-346 (VLGY…LAMV), and 368-388 (GGKL…ISQI).

This sequence belongs to the amino acid/polyamine transporter 2 family.

Its subcellular location is the cell inner membrane. Functionally, seems to be involved in glutamine transport. Complements an E.coli glnP deletion mutant. In Aliivibrio fischeri (strain ATCC 700601 / ES114) (Vibrio fischeri), this protein is Glutamine transporter 2.